Here is a 356-residue protein sequence, read N- to C-terminus: Dual-specificity RNA methyltransferase RlmN (356 aa).

The active-site Proton acceptor is the Glu-92. One can recognise a Radical SAM core domain in the interval 98–327; that stretch reads EKNRGTLCIS…HQGIRTMTRR (230 aa). Residues Cys-105 and Cys-337 are joined by a disulfide bond. 3 residues coordinate [4Fe-4S] cluster: Cys-112, Cys-116, and Cys-119. Residues 162–163, Ser-194, 216–218, and Asn-294 each bind S-adenosyl-L-methionine; these read GE and SLH. Cys-337 acts as the S-methylcysteine intermediate in catalysis.

This sequence belongs to the radical SAM superfamily. RlmN family. Requires [4Fe-4S] cluster as cofactor.

The protein resides in the cytoplasm. It catalyses the reaction adenosine(2503) in 23S rRNA + 2 reduced [2Fe-2S]-[ferredoxin] + 2 S-adenosyl-L-methionine = 2-methyladenosine(2503) in 23S rRNA + 5'-deoxyadenosine + L-methionine + 2 oxidized [2Fe-2S]-[ferredoxin] + S-adenosyl-L-homocysteine. The enzyme catalyses adenosine(37) in tRNA + 2 reduced [2Fe-2S]-[ferredoxin] + 2 S-adenosyl-L-methionine = 2-methyladenosine(37) in tRNA + 5'-deoxyadenosine + L-methionine + 2 oxidized [2Fe-2S]-[ferredoxin] + S-adenosyl-L-homocysteine. Specifically methylates position 2 of adenine 2503 in 23S rRNA and position 2 of adenine 37 in tRNAs. m2A2503 modification seems to play a crucial role in the proofreading step occurring at the peptidyl transferase center and thus would serve to optimize ribosomal fidelity. In Ruthia magnifica subsp. Calyptogena magnifica, this protein is Dual-specificity RNA methyltransferase RlmN.